The following is a 363-amino-acid chain: Suberization-associated anionic peroxidase (363 aa).

The first 20 residues, 1–20, serve as a signal peptide directing secretion; the sequence is MGFRLSHLSLALSFVALALA. A glycan (N-linked (GlcNAc...) asparagine) is linked at Asn36. Intrachain disulfides connect Cys80–Cys159 and Cys111–Cys116. Catalysis depends on His109, which acts as the Proton acceptor. 4 residues coordinate Ca(2+): Asp110, Val113, Gly115, and Asp117. Asn126, Asn161, and Asn199 each carry an N-linked (GlcNAc...) asparagine glycan. 2 disulfide bridges follow: Cys166-Cys352 and Cys245-Cys264. Substrate is bound at residue Pro208. Residues Asn213 and Asn225 are each glycosylated (N-linked (GlcNAc...) asparagine). His238 contributes to the heme b binding site. Residue Thr239 participates in Ca(2+) binding. Asn263 carries N-linked (GlcNAc...) asparagine glycosylation. Positions 277, 279, and 284 each coordinate Ca(2+).

The protein belongs to the peroxidase family. Classical plant (class III) peroxidase subfamily. Ca(2+) is required as a cofactor. It depends on heme b as a cofactor.

The protein localises to the secreted. The catalysed reaction is 2 a phenolic donor + H2O2 = 2 a phenolic radical donor + 2 H2O. In terms of biological role, removal of H(2)O(2), oxidation of toxic reductants, biosynthesis and degradation of lignin, suberization, auxin catabolism, response to environmental stresses such as wounding, pathogen attack and oxidative stress. These functions might be dependent on each isozyme/isoform in each plant tissue. Its function is as follows. Suggested to catalyze the deposition of the aromatic residues of suberin on the cell wall and thus play a role in cell-suberization. The polypeptide is Suberization-associated anionic peroxidase (Solanum tuberosum (Potato)).